Here is a 389-residue protein sequence, read N- to C-terminus: MNNIVHKLKTLVLNEAFGGVLLIVCTLLALLVQNGSFSEHYREFLNLKVGFSVGEFELNKPFLLWINDGLISIFFFAIGLELKKEFLHGDFKNPKNIVLPFMAALGGILIPAMLFVLVNIGDAYTLKGWAIPTATDTAFALAILMMCGKHIPSSLKIFLLSLAIFDDVGAILIIAIFYTTKLSIVAFVVAGIAILAMLVLNILGITRKSFYFICSVILWISVLKSGVHATLAGIITAFFIPMQTKNGEAFLEEIYESLKFWLAFVILPLFAFANAGVNLSNIDIGAIFSGVSVGIFLGLFVGKQAGVFLFSYLAIRFKFAALPQGSNLKQLYGVCILTGIGFTMSLFIDGLAYEVSDIFNYADNLAILIASFCSGIWGFIYLKFFATRS.

12 consecutive transmembrane segments (helical) span residues 12-32, 62-82, 97-117, 128-148, 157-177, 184-204, 220-240, 260-280, 282-302, 305-325, 331-351, and 365-385; these read VLNE…ALLV, FLLW…GLEL, IVLP…LFVL, GWAI…MMCG, IFLL…IAIF, IVAF…NILG, ISVL…AFFI, FWLA…VNLS, IDIG…LFVG, AGVF…LPQG, LYGV…IDGL, and LAIL…LKFF.

The protein belongs to the NhaA Na(+)/H(+) (TC 2.A.33) antiporter family.

It is found in the cell inner membrane. It catalyses the reaction Na(+)(in) + 2 H(+)(out) = Na(+)(out) + 2 H(+)(in). Na(+)/H(+) antiporter that extrudes sodium in exchange for external protons. This Campylobacter jejuni subsp. jejuni serotype O:23/36 (strain 81-176) protein is Na(+)/H(+) antiporter NhaA 1.